The following is a 156-amino-acid chain: Sperm acrosome-associated protein 5 (156 aa).

A signal peptide spans 1-18; it reads MQVSGTIVVILMAANVEA. The region spanning 19-147 is the C-type lysozyme domain; sequence KIYERCDLAK…SEWLRGCHMN (129 aa). Cystine bridges form between cysteine 24-cysteine 144, cysteine 48-cysteine 132, cysteine 82-cysteine 97, and cysteine 93-cysteine 111. Glutamate 53 is an active-site residue.

This sequence belongs to the glycosyl hydrolase 22 family.

Its subcellular location is the secreted. The catalysed reaction is Hydrolysis of (1-&gt;4)-beta-linkages between N-acetylmuramic acid and N-acetyl-D-glucosamine residues in a peptidoglycan and between N-acetyl-D-glucosamine residues in chitodextrins.. This is Sperm acrosome-associated protein 5 (SPACA5) from Bos taurus (Bovine).